The following is a 404-amino-acid chain: Coenzyme F420H(2) oxidase (404 aa).

Residues histidine 84, glutamate 86, aspartate 88, histidine 89, histidine 152, aspartate 170, and histidine 233 each contribute to the Fe cation site. In terms of domain architecture, Flavodoxin-like spans 259 to 399 (VTVIYDTMHH…ACFEAGRRLA (141 aa)). FMN is bound by residues 265-270 (TMHHST), 317-320 (AIYD), and 351-356 (SMGGRG).

The protein in the N-terminal section; belongs to the zinc metallo-hydrolase group 3 family. FMN serves as cofactor. Fe cation is required as a cofactor.

The enzyme catalyses 2 reduced coenzyme F420-(gamma-L-Glu)(n) + O2 = 2 oxidized coenzyme F420-(gamma-L-Glu)(n) + 2 H2O + 2 H(+). Its function is as follows. Catalyzes the oxidation of F420H(2) with O(2). May be involved in O(2) detoxification, reducing the intracellular O(2) concentration to a level allowing growth at the expense of methane formation. The sequence is that of Coenzyme F420H(2) oxidase from Methanothermobacter thermautotrophicus (strain ATCC 29096 / DSM 1053 / JCM 10044 / NBRC 100330 / Delta H) (Methanobacterium thermoautotrophicum).